Consider the following 461-residue polypeptide: Coronin-1A (461 aa).

Residue Ser-2 is modified to N-acetylserine. Ser-2 carries the phosphoserine; by PKC modification. WD repeat units follow at residues 13 to 63 (HVFG…LVLP), 73 to 110 (NVPM…MVWE), 123 to 160 (PVVT…LVWD), 164 to 204 (GVAV…RIIE), 207 to 251 (KGTI…ALWD), 258 to 296 (PLSL…RYFE), and 302 to 349 (PFLH…EPIA). The span at 404 to 418 (LRVNRGLDTGRKRTT) shows a compositional bias: basic and acidic residues. The interval 404–429 (LRVNRGLDTGRKRTTPEASGAPSSDA) is disordered. Thr-412 bears the Phosphothreonine; by PKC mark. Thr-418 is modified (phosphothreonine). Ser-422 is subject to Phosphoserine. A coiled-coil region spans residues 424–460 (APSSDAISRLEEEMRKLQATVQELQKRLDRLEETVQA). Lys-449 bears the N6-acetyllysine mark.

It belongs to the WD repeat coronin family. Binds actin. Post-translationally, phosphorylation at Thr-412 by PKC strongly down-regulates the association with actin. In terms of processing, polyubiquitinated by RNF128 with 'Lys-48'-linked chains, leading to proteasomal degradation. In terms of tissue distribution, expressed in brain, thymus, spleen, bone marrow and lymph node. Low in lung and gut.

The protein resides in the cytoplasm. It is found in the cytoskeleton. The protein localises to the cell cortex. It localises to the cytoplasmic vesicle. Its subcellular location is the phagosome membrane. May be a crucial component of the cytoskeleton of highly motile cells, functioning both in the invagination of large pieces of plasma membrane, as well as in forming protrusions of the plasma membrane involved in cell locomotion. In mycobacteria-infected macrophages, its retention on the phagosomal membrane prevents fusion between phagosomes and lysosomes. This chain is Coronin-1A (CORO1A), found in Bos taurus (Bovine).